The primary structure comprises 178 residues: Disulfide bond formation protein B (178 aa).

Residues 1-16 lie on the Cytoplasmic side of the membrane; that stretch reads MTIFSSLNQFSKGHVS. A helical membrane pass occupies residues 17–33; it reads WLLLLLFIIFFEACALY. Topologically, residues 34 to 51 are periplasmic; that stretch reads FQHVMMLAPCVMCIYERV. C43 and C46 are joined by a disulfide. Residues 52 to 67 traverse the membrane as a helical segment; sequence AMMGIGGAAIIGLIAP. Topologically, residues 68–74 are cytoplasmic; sequence NNALFRW. The chain crosses the membrane as a helical span at residues 75-92; sequence LGLIGWGLSSYKGLMLAM. The Periplasmic portion of the chain corresponds to 93–147; sequence QHVDYQFNPSPFATCDLFVTFPSWAPLNQWVPWMFEAYGDCSKIVWQFFDLSMPQ. C107 and C133 are joined by a disulfide. The helical transmembrane segment at 148–166 threads the bilayer; it reads WLVVIFAGNLVALALIVIA. Residues 167-178 are Cytoplasmic-facing; sequence QFFPVKRKNPIR.

Belongs to the DsbB family.

The protein localises to the cell inner membrane. Required for disulfide bond formation in some periplasmic proteins. Acts by oxidizing the DsbA protein. The protein is Disulfide bond formation protein B of Vibrio parahaemolyticus serotype O3:K6 (strain RIMD 2210633).